Here is a 233-residue protein sequence, read N- to C-terminus: Large ribosomal subunit protein uL1 (233 aa).

The protein belongs to the universal ribosomal protein uL1 family. As to quaternary structure, part of the 50S ribosomal subunit.

In terms of biological role, binds directly to 23S rRNA. The L1 stalk is quite mobile in the ribosome, and is involved in E site tRNA release. Functionally, protein L1 is also a translational repressor protein, it controls the translation of the L11 operon by binding to its mRNA. The protein is Large ribosomal subunit protein uL1 of Shewanella woodyi (strain ATCC 51908 / MS32).